We begin with the raw amino-acid sequence, 783 residues long: MMRGIDSRHELDPTLLLRDTRTFTQRLADFFADPTNISIVLISLAAVSYYFSEAATFLLIMGGIFFLYSYTRKQKLPFRLPQISRAKDYNDLKPGINKPNIARGITFFGNDRKTGEELWFANDDMRTHALIFGSTGSGKTETLVSLSYNALVQGSGFIYVDGKGDNSLYAKVFSMVRSMGREDDLLLINFMTGARDIVGPQEKRLSNTLNPFCQGSSSMLTQLVVSLMGSSGQSSDGDMWKGRAIAFVEALMRLLVYMRDEGAILLDANTIRNYFDLQRLESIVIDKVFPRDDQESVNIETIPKLVTDPLRNYLNTLPGYNKEKKGKQVSQVLEQHGFITMQLVRSFSSLADTYGHIIRTNLAEVDFKDVVLNRRILVVLLPALEKSPDELSNLGKIIVSSLKAMMAAGLGEEVEGDYRDVILRKPTNAPTPYMCILDEYGYYAVQGFAVVPAQARSLGFSAIFAGQDLPAFQKASKEEAASIGANTNIKICMKLEDPTETWDFFTKTAGEAYVTKVDSFQTKETSIANSYMDTKSSSFEKRARVDLLDLKEQTEGEAHIFFKSKIVRARMFYANPKPVKQLKINQFLKVEPPPDDYLMKLQKQLASFQSILESGDLSINKAVENEEITLISKALKESTIVEPIERGVAALIAFHGQNEPEPVEDIVEEEVEGALTIFSKLRIDPNAPPILVADKEVFSEPLLPINETRNQMITIERLAGAKDKYAGTVANELIKDFQIATSYPPEERDVIDVQELTGIIRDLSAKISAEREKANKKAAEELT.

Residues 47-67 (VSYYFSEAATFLLIMGGIFFL) form a helical membrane-spanning segment. The ATPase domain stretch occupies residues 100–500 (NIARGITFFG…ICMKLEDPTE (401 aa)). The interaction with IcmS/IcmW stretch occupies residues 671–773 (VEGALTIFSK…SAKISAEREK (103 aa)).

In terms of assembly, the T4BSS is a complex nanomachine composed of several subcomplexes. This subunit is part of the Type IV Coupling Complex (T4CC), a subcomplex composed of the DotLMNYZ core and the IcmSW-LvgA adapter subunits, linked by the C-terminal tail of DotL. Six DotLMNYZ hetero-pentameric units may assemble into a hexameric nanomachine, forming an inner membrane channel for effectors to pass through. Interacts directly with DotM. Interacts directly, via its C-terminal region, with the type IV adapter proteins IcmS and IcmW. Also interacts with DotN and LvgA via its C-terminal region.

It is found in the cell inner membrane. Functionally, component of the Dot/Icm type IVB secretion system (T4BSS), which is used to inject bacterial effector proteins into eukaryotic host cells. Part of a subcomplex which recruits effector proteins and delivers them to the core transmembrane subcomplex. Plays a central role in the assembly of the subcomplex. Required for the recruitment of IcmS and IcmW to the inner membrane and for the translocation of adapter-dependent substrates. May have ATPase activity. This Legionella pneumophila subsp. pneumophila (strain Philadelphia 1 / ATCC 33152 / DSM 7513) protein is Type 4 coupling protein DotL.